A 471-amino-acid chain; its full sequence is UDP-N-acetylmuramate--L-alanine ligase (471 aa).

Position 114-120 (114-120) interacts with ATP; it reads GTHGKTT.

It belongs to the MurCDEF family.

It localises to the cytoplasm. It carries out the reaction UDP-N-acetyl-alpha-D-muramate + L-alanine + ATP = UDP-N-acetyl-alpha-D-muramoyl-L-alanine + ADP + phosphate + H(+). Its pathway is cell wall biogenesis; peptidoglycan biosynthesis. In terms of biological role, cell wall formation. This chain is UDP-N-acetylmuramate--L-alanine ligase, found in Agrobacterium fabrum (strain C58 / ATCC 33970) (Agrobacterium tumefaciens (strain C58)).